The following is a 1036-amino-acid chain: Mediator of RNA polymerase II transcription subunit 24 (1036 aa).

It belongs to the Mediator complex subunit 24 family. In terms of assembly, component of the Mediator complex.

The protein localises to the nucleus. Component of the Mediator complex, a coactivator involved in the regulated transcription of nearly all RNA polymerase II-dependent genes. Mediator functions as a bridge to convey information from gene-specific regulatory proteins to the basal RNA polymerase II transcription machinery. Mediator is recruited to promoters by direct interactions with regulatory proteins and serves as a scaffold for the assembly of a functional preinitiation complex with RNA polymerase II and the general transcription factors. This is Mediator of RNA polymerase II transcription subunit 24 (MED24) from Anopheles gambiae (African malaria mosquito).